The primary structure comprises 145 residues: D-aminoacyl-tRNA deacylase (145 aa).

Residues 137–138 (GP) carry the Gly-cisPro motif, important for rejection of L-amino acids motif.

The protein belongs to the DTD family. As to quaternary structure, homodimer.

It is found in the cytoplasm. It catalyses the reaction glycyl-tRNA(Ala) + H2O = tRNA(Ala) + glycine + H(+). The catalysed reaction is a D-aminoacyl-tRNA + H2O = a tRNA + a D-alpha-amino acid + H(+). Its function is as follows. An aminoacyl-tRNA editing enzyme that deacylates mischarged D-aminoacyl-tRNAs. Also deacylates mischarged glycyl-tRNA(Ala), protecting cells against glycine mischarging by AlaRS. Acts via tRNA-based rather than protein-based catalysis; rejects L-amino acids rather than detecting D-amino acids in the active site. By recycling D-aminoacyl-tRNA to D-amino acids and free tRNA molecules, this enzyme counteracts the toxicity associated with the formation of D-aminoacyl-tRNA entities in vivo and helps enforce protein L-homochirality. This Klebsiella pneumoniae (strain 342) protein is D-aminoacyl-tRNA deacylase.